A 214-amino-acid polypeptide reads, in one-letter code: Pyridoxine/pyridoxamine 5'-phosphate oxidase (214 aa).

Substrate-binding positions include R10 to Y13 and K68. Residues R63–K68, Y78–T79, K85, and Q107 each bind FMN. Substrate-binding residues include Y125, R129, and S133. FMN-binding positions include Q142–S143 and W187. R193–H195 serves as a coordination point for substrate. An FMN-binding site is contributed by R197.

This sequence belongs to the pyridoxamine 5'-phosphate oxidase family. As to quaternary structure, homodimer. Requires FMN as cofactor.

It catalyses the reaction pyridoxamine 5'-phosphate + O2 + H2O = pyridoxal 5'-phosphate + H2O2 + NH4(+). The enzyme catalyses pyridoxine 5'-phosphate + O2 = pyridoxal 5'-phosphate + H2O2. It participates in cofactor metabolism; pyridoxal 5'-phosphate salvage; pyridoxal 5'-phosphate from pyridoxamine 5'-phosphate: step 1/1. Its pathway is cofactor metabolism; pyridoxal 5'-phosphate salvage; pyridoxal 5'-phosphate from pyridoxine 5'-phosphate: step 1/1. Catalyzes the oxidation of either pyridoxine 5'-phosphate (PNP) or pyridoxamine 5'-phosphate (PMP) into pyridoxal 5'-phosphate (PLP). The chain is Pyridoxine/pyridoxamine 5'-phosphate oxidase from Synechocystis sp. (strain ATCC 27184 / PCC 6803 / Kazusa).